The sequence spans 254 residues: Ciliary microtubule associated protein 1A (254 aa).

2 STPGR repeats span residues 180 to 205 (PGPA…MAAR) and 216 to 241 (PGPG…FGIK). The disordered stretch occupies residues 207–228 (EPPGDKTLKPGPGAHSPEKVTL).

It belongs to the CIMAP family. In terms of assembly, microtubule inner protein component of sperm flagellar doublet microtubules. Testis-specific (at protein level). Expression restricted to the germ cell fraction, absent in somatic cell fractions such as Sertoli and Leydig cells. Expression detected in the third week postpartum (23 days) after haploid germ cells developed, expression increased with age. Expressed in the tails of elongated spermatids sticking out toward the tubular lumen, and in cytoplasmic droplets still attached to the spermatid tail membrane. Expressed in the tails of mature sperm, from the connecting piece proximal to the head, along the middle and principal pieces, down to the distal end piece.

Its subcellular location is the cytoplasm. It localises to the cytoskeleton. The protein resides in the flagellum axoneme. In terms of biological role, outer dense fibers are filamentous structures located on the outside of the axoneme in the midpiece and principal piece of the mammalian sperm tail. May help to maintain the passive elastic structures and elastic recoil of the sperm tail. The sequence is that of Ciliary microtubule associated protein 1A (Cimap1a) from Mus musculus (Mouse).